The following is a 188-amino-acid chain: GMP synthase [glutamine-hydrolyzing] subunit A (188 aa).

The 187-residue stretch at 2–188 (KIYIIDNGGQ…FKNFIEKCRR (187 aa)) folds into the Glutamine amidotransferase type-1 domain. The active-site Nucleophile is cysteine 79. Active-site residues include histidine 166 and glutamate 168.

In terms of assembly, heterodimer composed of a glutamine amidotransferase subunit (A) and a GMP-binding subunit (B).

The catalysed reaction is XMP + L-glutamine + ATP + H2O = GMP + L-glutamate + AMP + diphosphate + 2 H(+). It participates in purine metabolism; GMP biosynthesis; GMP from XMP (L-Gln route): step 1/1. In terms of biological role, catalyzes the synthesis of GMP from XMP. The polypeptide is GMP synthase [glutamine-hydrolyzing] subunit A (Picrophilus torridus (strain ATCC 700027 / DSM 9790 / JCM 10055 / NBRC 100828 / KAW 2/3)).